Reading from the N-terminus, the 359-residue chain is MTEPVTVDVRTDPPYPVIIGRGLLGDLGRVLDGRHKVAILHQPTLTQTAEAIRTHLSEKGIDAHRIEIPDAEGGKELPVVGFIWQVLGRIGVGRKDAIVSLGGGAATDVAGFAAATWLRGIDIVHVPTTLLGMVDAAVGGKTGINTDAGKNLVGAFHQPAAVLIDLATLESLPRNEIVAGMAEIVKAGFIADPVILDMIEADPEAALDPSGAVLPELIRRAVVVKAEVVAADEKESQLREILNYGHTLAHAIERRERYQWRHGAAVSVGLVFAAELGRLAGRLDDDTTERHRAILTSLGLPVTYDADALPQLMESMLGDKKTRAGVLRFVVLDGLAKPGRLEGPDPSLLAAAYAEVARD.

Residues 70-75 (DAEGGK), 104-108 (GAATD), 128-129 (TT), Lys-141, and Lys-150 contribute to the NAD(+) site. Glu-183, His-246, and His-262 together coordinate Zn(2+).

This sequence belongs to the sugar phosphate cyclases superfamily. Dehydroquinate synthase family. Co(2+) serves as cofactor. Zn(2+) is required as a cofactor. The cofactor is NAD(+).

The protein localises to the cytoplasm. The enzyme catalyses 7-phospho-2-dehydro-3-deoxy-D-arabino-heptonate = 3-dehydroquinate + phosphate. The protein operates within metabolic intermediate biosynthesis; chorismate biosynthesis; chorismate from D-erythrose 4-phosphate and phosphoenolpyruvate: step 2/7. Its function is as follows. Catalyzes the conversion of 3-deoxy-D-arabino-heptulosonate 7-phosphate (DAHP) to dehydroquinate (DHQ). In Mycolicibacterium gilvum (strain PYR-GCK) (Mycobacterium gilvum (strain PYR-GCK)), this protein is 3-dehydroquinate synthase.